The primary structure comprises 158 residues: UPF0225 protein Pput_1155 (158 aa).

This sequence belongs to the UPF0225 family.

The chain is UPF0225 protein Pput_1155 from Pseudomonas putida (strain ATCC 700007 / DSM 6899 / JCM 31910 / BCRC 17059 / LMG 24140 / F1).